The chain runs to 601 residues: Elongation factor 4 (601 aa).

Residues 6–188 (EHIRNFSIIA…EIVRKIPAPE (183 aa)) form the tr-type G domain. GTP is bound by residues 18–23 (DHGKST) and 135–138 (NKID).

This sequence belongs to the TRAFAC class translation factor GTPase superfamily. Classic translation factor GTPase family. LepA subfamily.

It localises to the cell inner membrane. The catalysed reaction is GTP + H2O = GDP + phosphate + H(+). Required for accurate and efficient protein synthesis under certain stress conditions. May act as a fidelity factor of the translation reaction, by catalyzing a one-codon backward translocation of tRNAs on improperly translocated ribosomes. Back-translocation proceeds from a post-translocation (POST) complex to a pre-translocation (PRE) complex, thus giving elongation factor G a second chance to translocate the tRNAs correctly. Binds to ribosomes in a GTP-dependent manner. The protein is Elongation factor 4 of Hydrogenovibrio crunogenus (strain DSM 25203 / XCL-2) (Thiomicrospira crunogena).